The sequence spans 119 residues: FAD-linked sulfhydryl oxidase (119 aa).

An ERV/ALR sulfhydryl oxidase domain is found at methionine 1–tyrosine 97. A disulfide bridge connects residues cysteine 44 and cysteine 47.

Belongs to the asfivirus B119L family. Interacts with A151R. It depends on FAD as a cofactor.

The protein resides in the host cytoplasm. The protein localises to the virion. The enzyme catalyses 2 R'C(R)SH + O2 = R'C(R)S-S(R)CR' + H2O2. Functionally, FAD-dependent sulfhydryl oxidase that catalyzes the formation of disulfide bonds in viral proteins produced in the cell cytoplasm. Involved in virion maturation. In Ornithodoros (relapsing fever ticks), this protein is FAD-linked sulfhydryl oxidase.